The chain runs to 212 residues: NADH-quinone oxidoreductase subunit I (212 aa).

4Fe-4S ferredoxin-type domains follow at residues 76-105 (RLLE…IITD) and 115-144 (LNYS…HGDL). Positions 85, 88, 91, 95, 124, 127, 130, and 134 each coordinate [4Fe-4S] cluster.

This sequence belongs to the complex I 23 kDa subunit family. In terms of assembly, NDH-1 is composed of 14 different subunits. Subunits NuoA, H, J, K, L, M, N constitute the membrane sector of the complex. The cofactor is [4Fe-4S] cluster.

The protein resides in the cell inner membrane. It carries out the reaction a quinone + NADH + 5 H(+)(in) = a quinol + NAD(+) + 4 H(+)(out). Functionally, NDH-1 shuttles electrons from NADH, via FMN and iron-sulfur (Fe-S) centers, to quinones in the respiratory chain. The immediate electron acceptor for the enzyme in this species is believed to be ubiquinone. Couples the redox reaction to proton translocation (for every two electrons transferred, four hydrogen ions are translocated across the cytoplasmic membrane), and thus conserves the redox energy in a proton gradient. This Helicobacter hepaticus (strain ATCC 51449 / 3B1) protein is NADH-quinone oxidoreductase subunit I.